A 530-amino-acid polypeptide reads, in one-letter code: Bifunctional purine biosynthesis protein PurH (530 aa).

In terms of domain architecture, MGS-like spans 2 to 150 (TDHPRRVTRA…KNHDDVAVVV (149 aa)).

The protein belongs to the PurH family.

The catalysed reaction is (6R)-10-formyltetrahydrofolate + 5-amino-1-(5-phospho-beta-D-ribosyl)imidazole-4-carboxamide = 5-formamido-1-(5-phospho-D-ribosyl)imidazole-4-carboxamide + (6S)-5,6,7,8-tetrahydrofolate. It catalyses the reaction IMP + H2O = 5-formamido-1-(5-phospho-D-ribosyl)imidazole-4-carboxamide. Its pathway is purine metabolism; IMP biosynthesis via de novo pathway; 5-formamido-1-(5-phospho-D-ribosyl)imidazole-4-carboxamide from 5-amino-1-(5-phospho-D-ribosyl)imidazole-4-carboxamide (10-formyl THF route): step 1/1. It functions in the pathway purine metabolism; IMP biosynthesis via de novo pathway; IMP from 5-formamido-1-(5-phospho-D-ribosyl)imidazole-4-carboxamide: step 1/1. This is Bifunctional purine biosynthesis protein PurH from Bradyrhizobium diazoefficiens (strain JCM 10833 / BCRC 13528 / IAM 13628 / NBRC 14792 / USDA 110).